An 89-amino-acid chain; its full sequence is Small ribosomal subunit protein uS15 (89 aa).

The protein belongs to the universal ribosomal protein uS15 family. In terms of assembly, part of the 30S ribosomal subunit. Forms a bridge to the 50S subunit in the 70S ribosome, contacting the 23S rRNA.

Functionally, one of the primary rRNA binding proteins, it binds directly to 16S rRNA where it helps nucleate assembly of the platform of the 30S subunit by binding and bridging several RNA helices of the 16S rRNA. Forms an intersubunit bridge (bridge B4) with the 23S rRNA of the 50S subunit in the ribosome. The sequence is that of Small ribosomal subunit protein uS15 from Nocardia farcinica (strain IFM 10152).